The sequence spans 287 residues: ATP synthase gamma chain (287 aa).

The protein belongs to the ATPase gamma chain family. In terms of assembly, F-type ATPases have 2 components, CF(1) - the catalytic core - and CF(0) - the membrane proton channel. CF(1) has five subunits: alpha(3), beta(3), gamma(1), delta(1), epsilon(1). CF(0) has three main subunits: a, b and c.

It is found in the cell inner membrane. Produces ATP from ADP in the presence of a proton gradient across the membrane. The gamma chain is believed to be important in regulating ATPase activity and the flow of protons through the CF(0) complex. In Serratia proteamaculans (strain 568), this protein is ATP synthase gamma chain.